The following is a 174-amino-acid chain: Large ribosomal subunit protein uL10 (174 aa).

It belongs to the universal ribosomal protein uL10 family. As to quaternary structure, part of the ribosomal stalk of the 50S ribosomal subunit. The N-terminus interacts with L11 and the large rRNA to form the base of the stalk. The C-terminus forms an elongated spine to which L12 dimers bind in a sequential fashion forming a multimeric L10(L12)X complex.

Functionally, forms part of the ribosomal stalk, playing a central role in the interaction of the ribosome with GTP-bound translation factors. This Bordetella bronchiseptica (strain ATCC BAA-588 / NCTC 13252 / RB50) (Alcaligenes bronchisepticus) protein is Large ribosomal subunit protein uL10.